Reading from the N-terminus, the 286-residue chain is Beta-lactamase SHV-29 (286 aa).

The N-terminal stretch at 1–21 (MRYIRLCIISLLATLPLAVHA) is a signal peptide. Ser-66 functions as the Acyl-ester intermediate in the catalytic mechanism. The cysteines at positions 73 and 119 are disulfide-linked. The active-site Proton acceptor is Glu-164. 230 to 232 (KTG) provides a ligand contact to substrate.

It belongs to the class-A beta-lactamase family.

It carries out the reaction a beta-lactam + H2O = a substituted beta-amino acid. This chain is Beta-lactamase SHV-29 (bla), found in Klebsiella pneumoniae.